Consider the following 295-residue polypeptide: Phosphatidylserine decarboxylase proenzyme (295 aa).

Catalysis depends on charge relay system; for autoendoproteolytic cleavage activity residues D113, H169, and S256. Catalysis depends on S256, which acts as the Schiff-base intermediate with substrate; via pyruvic acid; for decarboxylase activity. Pyruvic acid (Ser); by autocatalysis is present on S256.

It belongs to the phosphatidylserine decarboxylase family. PSD-B subfamily. Prokaryotic type II sub-subfamily. In terms of assembly, heterodimer of a large membrane-associated beta subunit and a small pyruvoyl-containing alpha subunit. Pyruvate is required as a cofactor. In terms of processing, is synthesized initially as an inactive proenzyme. Formation of the active enzyme involves a self-maturation process in which the active site pyruvoyl group is generated from an internal serine residue via an autocatalytic post-translational modification. Two non-identical subunits are generated from the proenzyme in this reaction, and the pyruvate is formed at the N-terminus of the alpha chain, which is derived from the carboxyl end of the proenzyme. The autoendoproteolytic cleavage occurs by a canonical serine protease mechanism, in which the side chain hydroxyl group of the serine supplies its oxygen atom to form the C-terminus of the beta chain, while the remainder of the serine residue undergoes an oxidative deamination to produce ammonia and the pyruvoyl prosthetic group on the alpha chain. During this reaction, the Ser that is part of the protease active site of the proenzyme becomes the pyruvoyl prosthetic group, which constitutes an essential element of the active site of the mature decarboxylase.

It localises to the cell membrane. The catalysed reaction is a 1,2-diacyl-sn-glycero-3-phospho-L-serine + H(+) = a 1,2-diacyl-sn-glycero-3-phosphoethanolamine + CO2. It participates in phospholipid metabolism; phosphatidylethanolamine biosynthesis; phosphatidylethanolamine from CDP-diacylglycerol: step 2/2. Catalyzes the formation of phosphatidylethanolamine (PtdEtn) from phosphatidylserine (PtdSer). The sequence is that of Phosphatidylserine decarboxylase proenzyme from Clostridium botulinum (strain ATCC 19397 / Type A).